The sequence spans 390 residues: Probable splicing factor YJU2B (390 aa).

Positions 354 to 390 (DACKASSSSEEENSIDSCATGKSLVADYSDSDSGSEV) are disordered.

Belongs to the CWC16 family.

The protein localises to the nucleus. In terms of biological role, may be involved in mRNA splicing. This chain is Probable splicing factor YJU2B (yju2b), found in Danio rerio (Zebrafish).